Reading from the N-terminus, the 185-residue chain is Ribosome-recycling factor (185 aa).

The segment at 137-158 (NQVKKLEKDKEISEDESKKAQE) is disordered. The span at 140-158 (KKLEKDKEISEDESKKAQE) shows a compositional bias: basic and acidic residues.

The protein belongs to the RRF family.

Its subcellular location is the cytoplasm. Responsible for the release of ribosomes from messenger RNA at the termination of protein biosynthesis. May increase the efficiency of translation by recycling ribosomes from one round of translation to another. The polypeptide is Ribosome-recycling factor (Helicobacter pylori (strain P12)).